The sequence spans 105 residues: uncharacterized protein (105 aa).

This is an uncharacterized protein from Escherichia coli (strain K12).